The sequence spans 296 residues: Phosphoribosylaminoimidazole-succinocarboxamide synthase (296 aa).

This sequence belongs to the SAICAR synthetase family.

The catalysed reaction is 5-amino-1-(5-phospho-D-ribosyl)imidazole-4-carboxylate + L-aspartate + ATP = (2S)-2-[5-amino-1-(5-phospho-beta-D-ribosyl)imidazole-4-carboxamido]succinate + ADP + phosphate + 2 H(+). Its pathway is purine metabolism; IMP biosynthesis via de novo pathway; 5-amino-1-(5-phospho-D-ribosyl)imidazole-4-carboxamide from 5-amino-1-(5-phospho-D-ribosyl)imidazole-4-carboxylate: step 1/2. The sequence is that of Phosphoribosylaminoimidazole-succinocarboxamide synthase from Pelobacter propionicus (strain DSM 2379 / NBRC 103807 / OttBd1).